Consider the following 547-residue polypeptide: Intercellular adhesion molecule 3 (547 aa).

Positions 1-29 (MATMVPSVLWPRACWTLLVCCLLTPGVQG) are cleaved as a signal peptide. The Extracellular portion of the chain corresponds to 30-485 (QEFLLRVEPQ…VMDIEAGSSH (456 aa)). The Ig-like C2-type 1 domain occupies 46–103 (GGSLFVNCSTDCPSSEKIALETSLSKELVASGMGWAAFNLSNVTGNSRILCSVYCNGS). N-linked (GlcNAc...) asparagine glycans are attached at residues asparagine 52, asparagine 84, asparagine 87, asparagine 101, asparagine 110, and asparagine 134. Disulfide bonds link cysteine 53–cysteine 96 and cysteine 57–cysteine 100. The Ig-like C2-type 2 domain occupies 132 to 197 (GQNFTLRCQV…FSCRTELDMQ (66 aa)). Residues cysteine 139 and cysteine 190 are joined by a disulfide bond. 9 N-linked (GlcNAc...) asparagine glycosylation sites follow: asparagine 206, asparagine 264, asparagine 295, asparagine 308, asparagine 320, asparagine 363, asparagine 389, asparagine 453, and asparagine 457. Residues 234–301 (ETSWPVDCTL…IVCNVTLGGE (68 aa)) enclose the Ig-like C2-type 3 domain. Cysteine 241 and cysteine 294 form a disulfide bridge. Positions 329–382 (GSTVTVSCMAGARVQVTLDGVPAAAPGQPAQLQLNATESDDGRSFFCSATLEVD) constitute an Ig-like C2-type 4 domain. Cysteine 336 and cysteine 375 are joined by a disulfide. Residues 416-469 (KTRHVLQCQARGNPYPELRCLKEGSSREVPVGIPFFVNVTHNGTYQCQASSSRG) enclose the Ig-like C2-type 5 domain. Cysteine 423 and cysteine 462 are disulfide-bonded. A helical transmembrane segment spans residues 486 to 510 (FVPVFVAVLLTLGVVTIVLALMYVF). The Cytoplasmic portion of the chain corresponds to 511–547 (REHQRSGSYHVREESTYLPLTSMQPTEAMGEEPSRAE).

It belongs to the immunoglobulin superfamily. ICAM family. In terms of assembly, interacts with moesin/MSN. In terms of processing, upon stimulation by a physiologic stimuli becomes rapidly and transiently phosphorylated on serine residues. N-glycosylated; glycans consist of a mixture of tri- and tetra-antennary complex-type chains and high-mannose chains. As to expression, leukocytes.

Its subcellular location is the membrane. ICAM proteins are ligands for the leukocyte adhesion protein LFA-1 (integrin alpha-L/beta-2). ICAM3 is also a ligand for integrin alpha-D/beta-2. In association with integrin alpha-L/beta-2, contributes to apoptotic neutrophil phagocytosis by macrophages. The chain is Intercellular adhesion molecule 3 (ICAM3) from Homo sapiens (Human).